The chain runs to 277 residues: Bis(5'-nucleosyl)-tetraphosphatase, symmetrical (277 aa).

This sequence belongs to the Ap4A hydrolase family.

The enzyme catalyses P(1),P(4)-bis(5'-adenosyl) tetraphosphate + H2O = 2 ADP + 2 H(+). Hydrolyzes diadenosine 5',5'''-P1,P4-tetraphosphate to yield ADP. In Bordetella pertussis (strain Tohama I / ATCC BAA-589 / NCTC 13251), this protein is Bis(5'-nucleosyl)-tetraphosphatase, symmetrical.